Consider the following 295-residue polypeptide: Glycine--tRNA ligase alpha subunit (295 aa).

The protein belongs to the class-II aminoacyl-tRNA synthetase family. Tetramer of two alpha and two beta subunits.

It localises to the cytoplasm. It carries out the reaction tRNA(Gly) + glycine + ATP = glycyl-tRNA(Gly) + AMP + diphosphate. The polypeptide is Glycine--tRNA ligase alpha subunit (Thermosynechococcus vestitus (strain NIES-2133 / IAM M-273 / BP-1)).